The primary structure comprises 462 residues: A-type ATP synthase subunit B (462 aa).

It belongs to the ATPase alpha/beta chains family. As to quaternary structure, has multiple subunits with at least A(3), B(3), C, D, E, F, H, I and proteolipid K(x).

The protein localises to the cell membrane. Functionally, component of the A-type ATP synthase that produces ATP from ADP in the presence of a proton gradient across the membrane. The B chain is a regulatory subunit. The protein is A-type ATP synthase subunit B of Methanococcus vannielii (strain ATCC 35089 / DSM 1224 / JCM 13029 / OCM 148 / SB).